The following is a 466-amino-acid chain: Methylenetetrahydrofolate--tRNA-(uracil-5-)-methyltransferase TrmFO (466 aa).

An FAD-binding site is contributed by 12 to 17 (GAGLAG).

The protein belongs to the MnmG family. TrmFO subfamily. FAD serves as cofactor.

It localises to the cytoplasm. It catalyses the reaction uridine(54) in tRNA + (6R)-5,10-methylene-5,6,7,8-tetrahydrofolate + NADH + H(+) = 5-methyluridine(54) in tRNA + (6S)-5,6,7,8-tetrahydrofolate + NAD(+). It carries out the reaction uridine(54) in tRNA + (6R)-5,10-methylene-5,6,7,8-tetrahydrofolate + NADPH + H(+) = 5-methyluridine(54) in tRNA + (6S)-5,6,7,8-tetrahydrofolate + NADP(+). In terms of biological role, catalyzes the folate-dependent formation of 5-methyl-uridine at position 54 (M-5-U54) in all tRNAs. This is Methylenetetrahydrofolate--tRNA-(uracil-5-)-methyltransferase TrmFO from Synechococcus elongatus (strain ATCC 33912 / PCC 7942 / FACHB-805) (Anacystis nidulans R2).